A 62-amino-acid chain; its full sequence is Photosystem II reaction center protein Z (62 aa).

A run of 2 helical transmembrane segments spans residues 8 to 28 (AVFALIATSSVLVISVPLVFA) and 41 to 61 (FSGTSLWIGLVFLVAILNSLI).

Belongs to the PsbZ family. In terms of assembly, PSII is composed of 1 copy each of membrane proteins PsbA, PsbB, PsbC, PsbD, PsbE, PsbF, PsbH, PsbI, PsbJ, PsbK, PsbL, PsbM, PsbT, PsbY, PsbZ, Psb30/Ycf12, at least 3 peripheral proteins of the oxygen-evolving complex and a large number of cofactors. It forms dimeric complexes.

The protein resides in the plastid. It is found in the chloroplast thylakoid membrane. May control the interaction of photosystem II (PSII) cores with the light-harvesting antenna, regulates electron flow through the 2 photosystem reaction centers. PSII is a light-driven water plastoquinone oxidoreductase, using light energy to abstract electrons from H(2)O, generating a proton gradient subsequently used for ATP formation. This Hordeum vulgare (Barley) protein is Photosystem II reaction center protein Z.